We begin with the raw amino-acid sequence, 286 residues long: Ribosomal RNA small subunit methyltransferase A (286 aa).

The S-adenosyl-L-methionine site is built by N31, I33, G58, E80, D106, and N125.

It belongs to the class I-like SAM-binding methyltransferase superfamily. rRNA adenine N(6)-methyltransferase family. RsmA subfamily.

It is found in the cytoplasm. It catalyses the reaction adenosine(1518)/adenosine(1519) in 16S rRNA + 4 S-adenosyl-L-methionine = N(6)-dimethyladenosine(1518)/N(6)-dimethyladenosine(1519) in 16S rRNA + 4 S-adenosyl-L-homocysteine + 4 H(+). Functionally, specifically dimethylates two adjacent adenosines (A1518 and A1519) in the loop of a conserved hairpin near the 3'-end of 16S rRNA in the 30S particle. May play a critical role in biogenesis of 30S subunits. In Wolbachia pipientis wMel, this protein is Ribosomal RNA small subunit methyltransferase A.